Here is a 234-residue protein sequence, read N- to C-terminus: Probable pectate lyase F (234 aa).

The N-terminal stretch at 1–17 (MRSTAAVLSILLPGALA) is a signal peptide. An N-linked (GlcNAc...) asparagine glycan is attached at asparagine 168.

The protein belongs to the polysaccharide lyase 3 family. Requires Ca(2+) as cofactor.

The protein resides in the secreted. The enzyme catalyses Eliminative cleavage of (1-&gt;4)-alpha-D-galacturonan to give oligosaccharides with 4-deoxy-alpha-D-galact-4-enuronosyl groups at their non-reducing ends.. Its function is as follows. Pectinolytic enzyme consist of four classes of enzymes: pectin lyase, polygalacturonase, pectin methylesterase and rhamnogalacturonase. Among pectinolytic enzymes, pectin lyase is the most important in depolymerization of pectin, since it cleaves internal glycosidic bonds of highly methylated pectins. Favors pectate, the anion, over pectin, the methyl ester. The sequence is that of Probable pectate lyase F (plyF) from Aspergillus terreus (strain NIH 2624 / FGSC A1156).